A 96-amino-acid chain; its full sequence is Co-chaperonin GroES (96 aa).

This sequence belongs to the GroES chaperonin family. As to quaternary structure, heptamer of 7 subunits arranged in a ring. Interacts with the chaperonin GroEL.

Its subcellular location is the cytoplasm. Its function is as follows. Together with the chaperonin GroEL, plays an essential role in assisting protein folding. The GroEL-GroES system forms a nano-cage that allows encapsulation of the non-native substrate proteins and provides a physical environment optimized to promote and accelerate protein folding. GroES binds to the apical surface of the GroEL ring, thereby capping the opening of the GroEL channel. The protein is Co-chaperonin GroES of Shewanella frigidimarina (strain NCIMB 400).